The following is a 110-amino-acid chain: UPF0122 protein SAR1212 (110 aa).

This sequence belongs to the UPF0122 family.

In terms of biological role, might take part in the signal recognition particle (SRP) pathway. This is inferred from the conservation of its genetic proximity to ftsY/ffh. May be a regulatory protein. This is UPF0122 protein SAR1212 from Staphylococcus aureus (strain MRSA252).